We begin with the raw amino-acid sequence, 631 residues long: Chaperone protein DnaK (631 aa).

Thr-198 carries the post-translational modification Phosphothreonine; by autocatalysis. Residues Tyr-598–Ala-631 are disordered.

Belongs to the heat shock protein 70 family.

In terms of biological role, acts as a chaperone. The chain is Chaperone protein DnaK from Azorhizobium caulinodans (strain ATCC 43989 / DSM 5975 / JCM 20966 / LMG 6465 / NBRC 14845 / NCIMB 13405 / ORS 571).